The sequence spans 425 residues: Adenosylhomocysteinase (425 aa).

The substrate site is built by threonine 60, aspartate 132, and glutamate 157. 158-160 (TTT) contacts NAD(+). Lysine 187 and aspartate 191 together coordinate substrate. Residues asparagine 192, 221–226 (GYGWCG), glutamate 244, asparagine 279, 300–302 (SGH), and asparagine 347 each bind NAD(+).

It belongs to the adenosylhomocysteinase family. Requires NAD(+) as cofactor.

It localises to the cytoplasm. The enzyme catalyses S-adenosyl-L-homocysteine + H2O = L-homocysteine + adenosine. The protein operates within amino-acid biosynthesis; L-homocysteine biosynthesis; L-homocysteine from S-adenosyl-L-homocysteine: step 1/1. May play a key role in the regulation of the intracellular concentration of adenosylhomocysteine. This Nostoc sp. (strain PCC 7120 / SAG 25.82 / UTEX 2576) protein is Adenosylhomocysteinase.